A 470-amino-acid polypeptide reads, in one-letter code: Pre-mycofactocin glycosyltransferase (470 aa).

The chain crosses the membrane as a helical span at residues 315–335 (LVISGGALMAWILMSIGTGLG).

The protein belongs to the glycosyltransferase 2 family.

It localises to the cell membrane. Functionally, involved in the biosynthesis of the enzyme cofactor mycofactocin (MFT). Acts as a glycosyltransferase that catalyzes the oligoglycosylation of pre-mycofactocin (PMFT), adding up to nine beta-1,4-linked glucose residues. Is required for the in vivo ethanol assimilation in M.smegmatis. The sequence is that of Pre-mycofactocin glycosyltransferase (mftF) from Mycobacterium tuberculosis (strain CDC 1551 / Oshkosh).